We begin with the raw amino-acid sequence, 681 residues long: DNA ligase (681 aa).

NAD(+) is bound by residues 32 to 36 (DIEYD), 81 to 82 (SL), and Glu113. The N6-AMP-lysine intermediate role is filled by Lys115. NAD(+)-binding residues include Arg136, Glu173, Lys290, and Lys314. Cys408, Cys411, Cys426, and Cys432 together coordinate Zn(2+). In terms of domain architecture, BRCT spans 596 to 681 (EIDSPFAGKT…LNNHGDVSTL (86 aa)).

The protein belongs to the NAD-dependent DNA ligase family. LigA subfamily. Mg(2+) serves as cofactor. The cofactor is Mn(2+).

It catalyses the reaction NAD(+) + (deoxyribonucleotide)n-3'-hydroxyl + 5'-phospho-(deoxyribonucleotide)m = (deoxyribonucleotide)n+m + AMP + beta-nicotinamide D-nucleotide.. DNA ligase that catalyzes the formation of phosphodiester linkages between 5'-phosphoryl and 3'-hydroxyl groups in double-stranded DNA using NAD as a coenzyme and as the energy source for the reaction. It is essential for DNA replication and repair of damaged DNA. This chain is DNA ligase, found in Pectobacterium atrosepticum (strain SCRI 1043 / ATCC BAA-672) (Erwinia carotovora subsp. atroseptica).